A 441-amino-acid polypeptide reads, in one-letter code: uncharacterized protein (441 aa).

11 consecutive transmembrane segments (helical) span residues Phe-62–Gly-82, Leu-88–Gly-108, Ile-112–Leu-132, Ala-154–Val-174, Trp-192–Tyr-212, Ala-224–Ser-244, Ala-247–Cys-267, Ile-312–Ala-332, Ile-335–Leu-355, Gln-363–Leu-383, and Ile-399–Ala-419.

It is found in the membrane. This is an uncharacterized protein from Schizosaccharomyces pombe (strain 972 / ATCC 24843) (Fission yeast).